A 168-amino-acid chain; its full sequence is CDP-archaeol synthase (168 aa).

Helical transmembrane passes span proline 7–leucine 27, glycine 55–cysteine 75, tyrosine 80–isoleucine 100, glycine 109–tyrosine 129, and alanine 130–leucine 150.

Belongs to the CDP-archaeol synthase family. Mg(2+) is required as a cofactor.

It is found in the cell membrane. It catalyses the reaction 2,3-bis-O-(geranylgeranyl)-sn-glycerol 1-phosphate + CTP + H(+) = CDP-2,3-bis-O-(geranylgeranyl)-sn-glycerol + diphosphate. Its pathway is membrane lipid metabolism; glycerophospholipid metabolism. Its function is as follows. Catalyzes the formation of CDP-2,3-bis-(O-geranylgeranyl)-sn-glycerol (CDP-archaeol) from 2,3-bis-(O-geranylgeranyl)-sn-glycerol 1-phosphate (DGGGP) and CTP. This reaction is the third ether-bond-formation step in the biosynthesis of archaeal membrane lipids. This chain is CDP-archaeol synthase, found in Hyperthermus butylicus (strain DSM 5456 / JCM 9403 / PLM1-5).